We begin with the raw amino-acid sequence, 294 residues long: Lipoyl synthase (294 aa).

[4Fe-4S] cluster contacts are provided by cysteine 35, cysteine 40, cysteine 46, cysteine 61, cysteine 65, cysteine 68, and serine 275. A Radical SAM core domain is found at 46 to 264 (CWGGGTATVM…RDQGLALGFR (219 aa)).

It belongs to the radical SAM superfamily. Lipoyl synthase family. Requires [4Fe-4S] cluster as cofactor.

The protein localises to the cytoplasm. It catalyses the reaction [[Fe-S] cluster scaffold protein carrying a second [4Fe-4S](2+) cluster] + N(6)-octanoyl-L-lysyl-[protein] + 2 oxidized [2Fe-2S]-[ferredoxin] + 2 S-adenosyl-L-methionine + 4 H(+) = [[Fe-S] cluster scaffold protein] + N(6)-[(R)-dihydrolipoyl]-L-lysyl-[protein] + 4 Fe(3+) + 2 hydrogen sulfide + 2 5'-deoxyadenosine + 2 L-methionine + 2 reduced [2Fe-2S]-[ferredoxin]. It participates in protein modification; protein lipoylation via endogenous pathway; protein N(6)-(lipoyl)lysine from octanoyl-[acyl-carrier-protein]: step 2/2. In terms of biological role, catalyzes the radical-mediated insertion of two sulfur atoms into the C-6 and C-8 positions of the octanoyl moiety bound to the lipoyl domains of lipoate-dependent enzymes, thereby converting the octanoylated domains into lipoylated derivatives. The polypeptide is Lipoyl synthase (Anaeromyxobacter dehalogenans (strain 2CP-C)).